The sequence spans 513 residues: Sterol 14-alpha demethylase rstn2 (513 aa).

A helical membrane pass occupies residues 3-23 (WPLIGAYALLAFVAIIALNVT). Position 453 (Cys453) interacts with heme.

This sequence belongs to the cytochrome P450 family. Heme serves as cofactor.

The protein resides in the membrane. It carries out the reaction a 14alpha-methyl steroid + 3 reduced [NADPH--hemoprotein reductase] + 3 O2 = a Delta(14) steroid + formate + 3 oxidized [NADPH--hemoprotein reductase] + 4 H2O + 4 H(+). The enzyme catalyses a 14alpha-methyl steroid + reduced [NADPH--hemoprotein reductase] + O2 = a 14alpha-hydroxymethyl steroid + oxidized [NADPH--hemoprotein reductase] + H2O + H(+). The catalysed reaction is a 14alpha-hydroxymethyl steroid + reduced [NADPH--hemoprotein reductase] + O2 = a 14alpha-formyl steroid + oxidized [NADPH--hemoprotein reductase] + 2 H2O + H(+). It catalyses the reaction a 14alpha-formyl steroid + reduced [NADPH--hemoprotein reductase] + O2 = a Delta(14) steroid + formate + oxidized [NADPH--hemoprotein reductase] + H2O + 2 H(+). It carries out the reaction lanosterol + 3 reduced [NADPH--hemoprotein reductase] + 3 O2 = 4,4-dimethyl-5alpha-cholesta-8,14,24-trien-3beta-ol + formate + 3 oxidized [NADPH--hemoprotein reductase] + 4 H2O + 4 H(+). The enzyme catalyses lanosterol + reduced [NADPH--hemoprotein reductase] + O2 = 32-hydroxylanosterol + oxidized [NADPH--hemoprotein reductase] + H2O + H(+). The catalysed reaction is 32-hydroxylanosterol + reduced [NADPH--hemoprotein reductase] + O2 = 32-oxolanosterol + oxidized [NADPH--hemoprotein reductase] + 2 H2O + H(+). It catalyses the reaction 32-oxolanosterol + reduced [NADPH--hemoprotein reductase] + O2 = 4,4-dimethyl-5alpha-cholesta-8,14,24-trien-3beta-ol + formate + oxidized [NADPH--hemoprotein reductase] + H2O + 2 H(+). It carries out the reaction eburicol + 3 reduced [NADPH--hemoprotein reductase] + 3 O2 = 14-demethyleburicol + formate + 3 oxidized [NADPH--hemoprotein reductase] + 4 H2O + 4 H(+). The enzyme catalyses eburicol + reduced [NADPH--hemoprotein reductase] + O2 = 32-hydroxyeburicol + oxidized [NADPH--hemoprotein reductase] + H2O + H(+). The catalysed reaction is 32-hydroxyeburicol + reduced [NADPH--hemoprotein reductase] + O2 = 32-oxoeburicol + oxidized [NADPH--hemoprotein reductase] + 2 H2O + H(+). It catalyses the reaction 32-oxoeburicol + reduced [NADPH--hemoprotein reductase] + O2 = 14-demethyleburicol + formate + oxidized [NADPH--hemoprotein reductase] + H2O + 2 H(+). The protein operates within steroid biosynthesis; sterol biosynthesis. In terms of biological role, sterol 14-alpha demethylase; part of the gene cluster that mediates the biosynthesis of the tetrahydropyranyl antifungal agent restricticin that acts as an inhibitor of CYP51 and blocks the ergosterol biosynthesis. Sterol 14-alpha-demethylase plays a critical role in the biosynthesis of ergosterol, the major sterol component in fungal membranes that participates in a variety of functions. Rtsn2 acts as a self-resistant CYP51 that contains mutations found in CYP51s isolated from azole resistance strains and that is not inhibited by the final product of the cluster, restricticin. In Aspergillus nomiae NRRL (strain ATCC 15546 / NRRL 13137 / CBS 260.88 / M93), this protein is Sterol 14-alpha demethylase rstn2.